The sequence spans 377 residues: D-alanine--D-alanine ligase (377 aa).

One can recognise an ATP-grasp domain in the interval Lys-140–Asp-349. Val-170–Leu-225 provides a ligand contact to ATP. 3 residues coordinate Mg(2+): Asp-303, Glu-316, and Asn-318.

Belongs to the D-alanine--D-alanine ligase family. It depends on Mg(2+) as a cofactor. Requires Mn(2+) as cofactor.

It is found in the cytoplasm. It carries out the reaction 2 D-alanine + ATP = D-alanyl-D-alanine + ADP + phosphate + H(+). It participates in cell wall biogenesis; peptidoglycan biosynthesis. Its function is as follows. Cell wall formation. In Leuconostoc mesenteroides, this protein is D-alanine--D-alanine ligase.